The chain runs to 219 residues: Probable 3-beta-hydroxysteroid-Delta(8),Delta(7)-isomerase (219 aa).

The next 4 membrane-spanning stretches (helical) occupy residues 29-49 (ILVP…LISG), 62-82 (LMCW…TFVF), 119-139 (VEGI…YAIA), and 181-201 (FWAY…MIAI). The EXPERA domain occupies 58–200 (TDRWLMCWWA…SWVVIPTMIA (143 aa)).

It belongs to the EBP family.

Its subcellular location is the endoplasmic reticulum membrane. The enzyme catalyses lathosterol = 5alpha-cholest-8-en-3beta-ol. Its pathway is steroid biosynthesis; sterol biosynthesis. Catalyzes the conversion of Delta(8)-sterols to their corresponding Delta(7)-isomers. This Oryza sativa subsp. japonica (Rice) protein is Probable 3-beta-hydroxysteroid-Delta(8),Delta(7)-isomerase.